A 502-amino-acid polypeptide reads, in one-letter code: Mannitol 2-dehydrogenase (502 aa).

NAD(+) is bound at residue 35–46 (IVHVGVGGFHRA).

This sequence belongs to the mannitol dehydrogenase family. Monomer.

It catalyses the reaction D-mannitol + NAD(+) = D-fructose + NADH + H(+). Functionally, catalyzes the NAD(H)-dependent interconversion of D-fructose and D-mannitol in the mannitol metabolic pathway. The protein is Mannitol 2-dehydrogenase of Pyricularia oryzae (strain 70-15 / ATCC MYA-4617 / FGSC 8958) (Rice blast fungus).